We begin with the raw amino-acid sequence, 157 residues long: Small ribosomal subunit protein uS7 (157 aa).

Belongs to the universal ribosomal protein uS7 family. In terms of assembly, part of the 30S ribosomal subunit. Contacts proteins S9 and S11.

Functionally, one of the primary rRNA binding proteins, it binds directly to 16S rRNA where it nucleates assembly of the head domain of the 30S subunit. Is located at the subunit interface close to the decoding center, probably blocks exit of the E-site tRNA. The protein is Small ribosomal subunit protein uS7 of Polaromonas sp. (strain JS666 / ATCC BAA-500).